A 193-amino-acid chain; its full sequence is Fra a 1-associated protein (193 aa).

Positions 1–27 (MGWVWKDDDEQGGHVNPSAADISPRLD) are disordered.

In terms of assembly, interacts with FRAA1E, FRAA2 and FRAA3.

In Fragaria ananassa (Strawberry), this protein is Fra a 1-associated protein.